Here is a 1404-residue protein sequence, read N- to C-terminus: DNA-directed RNA polymerase subunit beta' (1404 aa).

Zn(2+) is bound by residues C70, C72, C85, and C88. Residues D460, D462, and D464 each coordinate Mg(2+). C825, C899, C906, and C909 together coordinate Zn(2+).

It belongs to the RNA polymerase beta' chain family. The RNAP catalytic core consists of 2 alpha, 1 beta, 1 beta' and 1 omega subunit. When a sigma factor is associated with the core the holoenzyme is formed, which can initiate transcription. Requires Mg(2+) as cofactor. Zn(2+) serves as cofactor.

The enzyme catalyses RNA(n) + a ribonucleoside 5'-triphosphate = RNA(n+1) + diphosphate. Functionally, DNA-dependent RNA polymerase catalyzes the transcription of DNA into RNA using the four ribonucleoside triphosphates as substrates. The protein is DNA-directed RNA polymerase subunit beta' of Nitrosomonas europaea (strain ATCC 19718 / CIP 103999 / KCTC 2705 / NBRC 14298).